The primary structure comprises 106 residues: Cyclin-dependent protein kinase inhibitor SMR15 (106 aa).

Functionally, probable cyclin-dependent protein kinase (CDK) inhibitor that functions as a repressor of mitosis in the endoreduplication cell cycle. In Arabidopsis thaliana (Mouse-ear cress), this protein is Cyclin-dependent protein kinase inhibitor SMR15.